The chain runs to 84 residues: U8-theraphotoxin-Hhn1c 1 (84 aa).

Positions 1–21 (MKVVLIVCLVWVMAMMELVSC) are cleaved as a signal peptide. 5 disulfide bridges follow: Cys23/Cys35, Cys29/Cys44, Cys34/Cys67, Cys54/Cys75, and Cys69/Cys81.

The protein belongs to the AVIT (prokineticin) family. As to expression, expressed by the venom gland.

The protein resides in the secreted. This Cyriopagopus hainanus (Chinese bird spider) protein is U8-theraphotoxin-Hhn1c 1.